Reading from the N-terminus, the 144-residue chain is Transcription antitermination protein NusB (144 aa).

Belongs to the NusB family.

Its function is as follows. Involved in transcription antitermination. Required for transcription of ribosomal RNA (rRNA) genes. Binds specifically to the boxA antiterminator sequence of the ribosomal RNA (rrn) operons. The sequence is that of Transcription antitermination protein NusB from Streptomyces avermitilis (strain ATCC 31267 / DSM 46492 / JCM 5070 / NBRC 14893 / NCIMB 12804 / NRRL 8165 / MA-4680).